An 85-amino-acid chain; its full sequence is Large ribosomal subunit protein bL27 (85 aa).

The disordered stretch occupies residues 1–21 (MAHKKGVGSSRNGRDSDGQRL).

The protein belongs to the bacterial ribosomal protein bL27 family.

This is Large ribosomal subunit protein bL27 from Geobacter sp. (strain M21).